The primary structure comprises 788 residues: Response regulator SSK1 (788 aa).

The 158-residue stretch at asparagine 534–glycine 691 folds into the Response regulatory domain. At aspartate 583 the chain carries 4-aspartylphosphate.

Belongs to the SSK1 family.

The protein localises to the cytoplasm. In terms of biological role, two-domain response regulator protein in the two-component signal transduction system of the HOG1 pathway. Controls high-osmolarity adaptation and fungicide sensitivity via its regulation of the phosphorylation of HOG1. This is Response regulator SSK1 from Cochliobolus heterostrophus (strain C5 / ATCC 48332 / race O) (Southern corn leaf blight fungus).